The following is a 74-amino-acid chain: Antimicrobial peptide HsAp1 (74 aa).

Positions 1–21 (MSRRVILTLVLVTILVKTMAG) are cleaved as a signal peptide. A propeptide spanning residues 22-33 (MESKKVETTDEI) is cleaved from the precursor. Proline 65 is subject to Proline amide. A propeptide spanning residues 69–74 (AISEQT) is cleaved from the precursor.

The protein belongs to the non-disulfide-bridged peptide (NDBP) superfamily. Medium-length antimicrobial peptide (group 3) family. Expressed by the venom gland.

It is found in the secreted. Its subcellular location is the target cell membrane. Functionally, possesses antimicrobial activity against both Gram-negative (MIC=23.8-51.2 uM) and Gram-positive (MIC=11.8-46.5 uM) bacteria, as well as against the fungus C.tropicalis (MIC=48.6 uM). Also possesses a relatively high hemolytic activity. May act by disrupting the integrity of the bacterial cell membrane. This Heterometrus spinifer (Asia giant forest scorpion) protein is Antimicrobial peptide HsAp1.